A 178-amino-acid chain; its full sequence is PRA1 family protein 2 (178 aa).

At 1-41 (MSEVRLPPLRALDDFVLGSARLAAPDPCDPQRWCHRVINNL) the chain is on the cytoplasmic side. A helical transmembrane segment spans residues 42–62 (LYYQTNYLLCFGIGLALAGYV). At 63-64 (RP) the chain is on the extracellular side. Residues 65–85 (LHTLLSALVVAVALGMLVWAA) traverse the membrane as a helical segment. Residues 86–96 (ETRAAVRRCRR) lie on the Cytoplasmic side of the membrane. A helical transmembrane segment spans residues 97 to 119 (SHPAACLAAVLAVGLLVLWVVGG). The Extracellular segment spans residues 120–122 (ACT). A helical transmembrane segment spans residues 123-140 (FLLSIAGPVLLILVHASL). At 141 to 178 (RLRNLKNKIENKIESIGLKRTPMGLLLEALGQEQEAGS) the chain is on the cytoplasmic side.

It belongs to the PRA1 family. As to quaternary structure, interacts with CCR5 and GDE1.

Its subcellular location is the endosome membrane. May be involved in ER/Golgi transport and vesicular traffic. Plays a proapoptotic role in cerulenin-induced neuroblastoma apoptosis. The sequence is that of PRA1 family protein 2 (PRAF2) from Macaca fascicularis (Crab-eating macaque).